The following is a 426-amino-acid chain: Serine--tRNA ligase (426 aa).

233–235 (TAE) contacts L-serine. Position 264–266 (264–266 (RSE)) interacts with ATP. E287 contacts L-serine. 351–354 (EISS) is an ATP binding site. Residue S387 coordinates L-serine.

The protein belongs to the class-II aminoacyl-tRNA synthetase family. Type-1 seryl-tRNA synthetase subfamily. As to quaternary structure, homodimer. The tRNA molecule binds across the dimer.

The protein resides in the cytoplasm. It carries out the reaction tRNA(Ser) + L-serine + ATP = L-seryl-tRNA(Ser) + AMP + diphosphate + H(+). The catalysed reaction is tRNA(Sec) + L-serine + ATP = L-seryl-tRNA(Sec) + AMP + diphosphate + H(+). The protein operates within aminoacyl-tRNA biosynthesis; selenocysteinyl-tRNA(Sec) biosynthesis; L-seryl-tRNA(Sec) from L-serine and tRNA(Sec): step 1/1. Its function is as follows. Catalyzes the attachment of serine to tRNA(Ser). Is also able to aminoacylate tRNA(Sec) with serine, to form the misacylated tRNA L-seryl-tRNA(Sec), which will be further converted into selenocysteinyl-tRNA(Sec). This Francisella philomiragia subsp. philomiragia (strain ATCC 25017 / CCUG 19701 / FSC 153 / O#319-036) protein is Serine--tRNA ligase.